The primary structure comprises 373 residues: tRNA (guanine(26)-N(2))-dimethyltransferase (373 aa).

One can recognise a Trm1 methyltransferase domain in the interval 2 to 365; the sequence is KIISEGETKL…AELSDLVVLI (364 aa). Positions 35, 66, 86, 113, and 114 each coordinate S-adenosyl-L-methionine.

This sequence belongs to the class I-like SAM-binding methyltransferase superfamily. Trm1 family.

The catalysed reaction is guanosine(26) in tRNA + 2 S-adenosyl-L-methionine = N(2)-dimethylguanosine(26) in tRNA + 2 S-adenosyl-L-homocysteine + 2 H(+). Dimethylates a single guanine residue at position 26 of a number of tRNAs using S-adenosyl-L-methionine as donor of the methyl groups. The protein is tRNA (guanine(26)-N(2))-dimethyltransferase of Methanococcus maripaludis (Methanococcus deltae).